A 940-amino-acid chain; its full sequence is Inter-alpha-trypsin inhibitor heavy chain H5 (940 aa).

An N-terminal signal peptide occupies residues 1-16; it reads MLPLLGLCFALPLCAG. Residues 35-161 enclose the VIT domain; sequence IPRQVRLLQR…KAAFLLSYEE (127 aa). N-linked (GlcNAc...) asparagine glycosylation is found at Asn97 and Asn127. Positions 207–227 are disordered; the sequence is NSRQRGSGRGPDDSGPPPSTV. 6 N-linked (GlcNAc...) asparagine glycosylation sites follow: Asn231, Asn421, Asn508, Asn694, Asn778, and Asn795. The 184-residue stretch at 295 to 478 folds into the VWFA domain; the sequence is NVVFVLDSSA…AQLIGFYDEI (184 aa).

The protein belongs to the ITIH family.

The protein localises to the secreted. Functionally, may act as a tumor suppressor. This Bos taurus (Bovine) protein is Inter-alpha-trypsin inhibitor heavy chain H5 (ITIH5).